Consider the following 417-residue polypeptide: NADH-quinone oxidoreductase subunit D (417 aa).

Belongs to the complex I 49 kDa subunit family. NDH-1 is composed of 14 different subunits. Subunits NuoB, C, D, E, F, and G constitute the peripheral sector of the complex.

The protein localises to the cell inner membrane. The enzyme catalyses a quinone + NADH + 5 H(+)(in) = a quinol + NAD(+) + 4 H(+)(out). Functionally, NDH-1 shuttles electrons from NADH, via FMN and iron-sulfur (Fe-S) centers, to quinones in the respiratory chain. The immediate electron acceptor for the enzyme in this species is believed to be ubiquinone. Couples the redox reaction to proton translocation (for every two electrons transferred, four hydrogen ions are translocated across the cytoplasmic membrane), and thus conserves the redox energy in a proton gradient. This is NADH-quinone oxidoreductase subunit D from Coxiella burnetii (strain Dugway 5J108-111).